A 585-amino-acid polypeptide reads, in one-letter code: Bestrophin-1 (585 aa).

Residues 1 to 31 (MTITYTSQVANARLGSFSRLLLCWRGSIYKL) are Cytoplasmic-facing. Ala10 is a Ca(2+) binding site. The chain crosses the membrane as a helical span at residues 32 to 51 (LYGEFFIFLLCYYIIRFIYR). Residues 52–60 (LALTEEQQL) lie on the Extracellular side of the membrane. A helical membrane pass occupies residues 61 to 82 (MFEKLTLYCDSYIQLIPISFVL). At 83-237 (GFYVTLVVTR…DWISIPLVYT (155 aa)) the chain is on the cytoplasmic side. Residues 238–255 (QVVTVAVYSFFLTCLVGR) traverse the membrane as a helical segment. The Extracellular segment spans residues 256–274 (QFLNPAKAYPGHELDLVVP). A helical transmembrane segment spans residues 275 to 288 (VFTFLQFFFYVGWL). The Cytoplasmic portion of the chain corresponds to 289-585 (KVAEQLINPF…ALENRDEAHS (297 aa)). Gln293, Asn296, Asp301, and Asp304 together coordinate Ca(2+). Residues 346-379 (PYTAASAQFRRASFMGSTFNISLNKEEMEFQPNQ) form an auto-inhibitory segment region.

The protein belongs to the anion channel-forming bestrophin (TC 1.A.46) family. Calcium-sensitive chloride channel subfamily. In terms of assembly, interacts with YWHAG; this interaction promotes the ligand-gated L-glutamate channel activity leading to the positive regulation of NMDA glutamate receptor activity through the L-glutamate secretion.

It is found in the cell membrane. It localises to the basolateral cell membrane. The catalysed reaction is chloride(in) = chloride(out). The enzyme catalyses hydrogencarbonate(in) = hydrogencarbonate(out). It carries out the reaction 4-aminobutanoate(in) = 4-aminobutanoate(out). It catalyses the reaction L-glutamate(out) = L-glutamate(in). In terms of biological role, ligand-gated anion channel that allows the movement of anions across cell membranes when activated by calcium (Ca2+). Allows the movement of chloride and hydrogencarbonate. Found in a partially open conformation leading to significantly smaller chloride movement. Upon F2R/PAR-1 activation, the sequestered calcium is released into the cytosol of astrocytes, leading to the (Ca2+)-dependent release of L-glutamate into the synaptic cleft that targets the neuronal postsynaptic GRIN2A/NMDAR receptor resulting in the synaptic plasticity regulation. Upon activation of the norepinephrine-alpha-1 adrenergic receptor signaling pathway, transports as well D-serine than L-glutamate in a (Ca2+)-dependent manner, leading to activation of adjacent NMDAR receptors and therefore regulates the heterosynaptic long-term depression and metaplasticity during initial memory acquisition. Releases the 4-aminobutanoate neurotransmitter in a (Ca2+)-dependent manner, and participates in its tonic release from cerebellar glial cells. The polypeptide is Bestrophin-1 (BEST1) (Macaca fascicularis (Crab-eating macaque)).